A 1360-amino-acid polypeptide reads, in one-letter code: MAYTTKVNGCAAEKADGVLNGDHNKEKKDPYFVETPYGFQLDLDFVKYVDDIQKGNTIKKLNIQKRRKPSVPCPEVRAIPGHQGVWTSTESLSSSNSDDSKQCPSFLLARSHVTSTPIPRPPAPLETSPTFAVSENRQLLPPPSPQLPRHNLHVTKTLMETRRRLEQERVTMQMAPGDFRRPRLASFGGMGSTSSLPSFVGSANHSSAIHQLQNGYQGNGDYNSYVPAAPTTSSMGSSVRHSPLSSGISTPVTNVSPMHLQHIREQMAIALKRLKELEEQVRTIPVLQVKISVLQEEKRQLASQLKSQRASSQNEACGVRKRSYSAGNASQLELLARARRGGGELYIDYEEEEMESVEQSTQRIQEFRQLTADMQALERKIQDSSCEVASELRENGQCPSRECKSVAVGSDENMNDVVVYHRDLRPCKDTAVGTVTETRNVGISVTEAMLGVITEADKEIELQQQTIEALKEKIYRLEVQLKETTHDREMTKLKQELQAAGSRKKVDKATMAQPLVFSKLVEALVPTRDQMVGSHVDTRESCVGTSVQTSSVGTSCHPDCKNQVVGSELPMNWWVVKERVAMHDQCVGRSVETCDRSVGVEVSVCETGSNTEASGSDLTLLKTNLNLKDVRSIGCGDCSVDVIVCFPKECTSRSMNTEAVGQEEAAVMAVPHTTDQHTSTNLERVDQCTNTEAATLVESCTNTLLSTMDKQTSTQTVEMRTVAIGEGRVRDINPSTKTRSVGVGTVLSGNSEFDRPCAVKTKESGVGQINIQDNYLVGLKMRTIACGPPQLTVGLMGSRRSVGVGNEPVGELPEESPQPRVASGMVTGLDHYIERVQRLLAEQQTLLAENYSELAEAFGEPHSQIGSLNSQLISTLSSINSVMKSASTEELRNSDFQKASLGKTTGNHLEYTCKCGGLRSGGLLNVQPSQPEVEAETAEGKHSRGHEQFPMQGSTLPPVNLTDDQIATGLYVCPNNENTLKSIMKKSDGNKDSNGAKKNLQFIGINGGYETTSSDESSSDGSSSSESDDECDTIGYPPEEEEEEEEKDHDTRGMAEGHHAVNIEGFKSARVEDEVQVPECEPEKEEIRERYELSEKMLSACNLLKYNIKDPKALASKDMRICLNTLQHDWFRVSSQKSAVPAMVGDYIAAFEAVSPDVLRYIINMADGNGNTALHYSVSHSNFQIVKLLLDADVCNVDHQNKAGYTPIMLAALAAVEAEKDMQVVEELFSCGDVNAKASQAGQTALMLAVSHGRIDMVKGLLACGADVNIQDDEGSTALMCASEHGHVEIVKLLLAQPGCNGHLEDNDGSTALSIALEAGHKDIAVLLYAHLNFSKAQSPSTPRLGRKTSPGPTHRGSFD.

The interval 30-68 (PYFVETPYGFQLDLDFVKYVDDIQKGNTIKKLNIQKRRK) is KN motif; Interaction with TLN1. Residues 41-44 (LDLD) carry the Important for binding to TLN1 motif. The Nuclear export signal 1 (NES 1) signature appears at 43-52 (LDFVKYVDDI). Positions 65-68 (KRRK) match the Nuclear localization signal 1 (NLS 1) motif. The tract at residues 66–103 (RRKPSVPCPEVRAIPGHQGVWTSTESLSSSNSDDSKQC) is disordered. A compositionally biased stretch (low complexity) spans 88–103 (STESLSSSNSDDSKQC). Positions 125–134 (LETSPTFAVS) match the Nuclear export signal 2 (NES 2) motif. S186 carries the phosphoserine modification. The segment at 221–253 (DYNSYVPAAPTTSSMGSSVRHSPLSSGISTPVT) is disordered. The segment covering 230 to 253 (PTTSSMGSSVRHSPLSSGISTPVT) has biased composition (polar residues). The interval 244 to 339 (LSSGISTPVT…SQLELLARAR (96 aa)) is interaction with PPFIBP1. The stretch at 260-311 (LQHIREQMAIALKRLKELEEQVRTIPVLQVKISVLQEEKRQLASQLKSQRAS) forms a coiled coil. The residue at position 325 (S325) is a Phosphoserine. 2 coiled-coil regions span residues 367–394 (FRQL…ELRE) and 453–487 (ITEA…TTHD). The Nuclear export signal 3 (NES 3) signature appears at 618-627 (LTLLKTNLNL). 2 disordered regions span residues 929–954 (SQPE…MQGS) and 983–1053 (IMKK…DTRG). Basic and acidic residues-rich tracts occupy residues 938 to 947 (AEGKHSRGHE) and 985 to 995 (KKSDGNKDSNG). The Nuclear localization signal 2 (NLS 2) signature appears at 985–998 (KKSDGNKDSNGAKK). Residues 1010 to 1025 (ETTSSDESSSDGSSSS) are compositionally biased toward low complexity. Residues 1026–1047 (ESDDECDTIGYPPEEEEEEEEK) are compositionally biased toward acidic residues. Residues 1081–1360 (EPEKEEIRER…PGPTHRGSFD (280 aa)) are interaction with KIF21A. One copy of the ANK 0; degenerate repeat lies at 1117–1154 (KDMRICLNTLQHDWFRVSSQKSAVPAMVGDYIAAFEAV). 5 ANK repeats span residues 1169-1199 (NGNT…NVDH), 1203-1236 (AGYT…DVNA), 1241-1270 (AGQT…DVNI), 1274-1306 (EGST…HLED), and 1308-1337 (DGST…FSKA). The interval 1337–1360 (AQSPSTPRLGRKTSPGPTHRGSFD) is disordered.

Part of a cortical microtubule stabilization complex (CMSC) composed of KANK1, PPFIA1, PPFIBP1, ERC1/ELKS, PHLDB2/LL5beta, CLASPs, KIF21A and possibly additional interactors; within CMSCs KANK1 and PHLDB2/LL5beta appear to be the core components for targeting of microtubule-binding proteins KIF21A and CLASPs, whereas PPFIA1, PPFIBP1 and ERC1/ELKS serve as scaffolds for protein clustering. Interacts (via KN motif) with TLN1 (via R7 domain); this mediates CMSC clustering around focal adhesions. Interacts (via CC1 domain, residues 244-339) with PPFIBP1. Interacts (via ANK repeats 1-5) with KIF21A (via residues 1142-1169). Interacts with YWHAQ; the interaction requires KANK1 phosphorylation at Ser-325 and is enhanced by growth factor stimulation. Interacts with YWHAB, YWHAG, YWHAE, YWHAH, YWHAZ and SFN; the interaction requires KANK1 phosphorylation at Ser-325. Interacts with ARFGEF1; however, colocalization cannot be experimentally confirmed. Interacts with BAIAP2. Interacts with CTNNB1. Interacts (via coiled coil domain) with DAAM1 (via coiled coil domain).

The protein localises to the cytoplasm. Its subcellular location is the cell cortex. The protein resides in the cell projection. It is found in the ruffle membrane. It localises to the nucleus. In terms of biological role, adapter protein that links structural and signaling protein complexes positioned to guide microtubule and actin cytoskeleton dynamics during cell morphogenesis. At focal adhesions (FAs) rims, organizes cortical microtubule stabilizing complexes (CMSCs) and directly interacts with major FA component TLN1, forming macromolecular assemblies positioned to control microtubule-actin crosstalk at the cell edge. Recruits KIF21A in CMSCs at axonal growth cones and regulates axon guidance by suppressing microtubule growth without inducing microtubule disassembly once it reaches the cell cortex. Interacts with ARFGEF1 and participates in establishing microtubule-organizing center (MTOC) orientation and directed cell movement in wound healing. Regulates actin stress fiber formation and cell migration by inhibiting RHOA activation in response to growth factors; this function involves phosphorylation through PI3K/Akt signaling and may depend on the competitive interaction with 14-3-3 adapter proteins to sequester them from active complexes. Inhibits the formation of lamellipodia but not of filopodia; this function may depend on the competitive interaction with BAIAP2 to block its association with activated RAC1. Inhibits fibronectin-mediated cell spreading; this function is partially mediated by BAIAP2. In the nucleus, is involved in beta-catenin-dependent activation of transcription. During cell division, may regulate DAAM1-dependent RHOA activation that signals centrosome maturation and chromosomal segregation. May also be involved in contractile ring formation during cytokinesis. Potential tumor suppressor for renal cell carcinoma. This chain is KN motif and ankyrin repeat domains 1, found in Mus musculus (Mouse).